The following is a 289-amino-acid chain: uncharacterized protein (289 aa).

This is an uncharacterized protein from Homo sapiens (Human).